The following is a 427-amino-acid chain: Glutamate-1-semialdehyde 2,1-aminomutase 2 (427 aa).

Residue Lys-267 is modified to N6-(pyridoxal phosphate)lysine.

Belongs to the class-III pyridoxal-phosphate-dependent aminotransferase family. HemL subfamily. Homodimer. The cofactor is pyridoxal 5'-phosphate.

It localises to the cytoplasm. It carries out the reaction (S)-4-amino-5-oxopentanoate = 5-aminolevulinate. Its pathway is porphyrin-containing compound metabolism; protoporphyrin-IX biosynthesis; 5-aminolevulinate from L-glutamyl-tRNA(Glu): step 2/2. The sequence is that of Glutamate-1-semialdehyde 2,1-aminomutase 2 from Staphylococcus haemolyticus (strain JCSC1435).